Consider the following 227-residue polypeptide: Hydroxylase/desaturase asaB (227 aa).

It belongs to the asaB hydroxylase/desaturase family.

Its pathway is secondary metabolite biosynthesis. Functionally, hydroxylase/desaturase; part of the gene cluster that mediates the biosynthesis of aspergillic acid, a hydroxamic acid-containing pyrazinone with aliphatic side chains that originates from leucine (Leu) and isoleucine (Ile). Aspergillic acid has antibiotic properties and was shown to be lethal to mice. The first step in the pathway is the production of deoxyaspergillic acid via a condensation between the Ile amine and the Leu carboxylic acid, followed by a reductive release from the protein forming the dipeptide aldehyde NH(2)-Leu-Ile-CHO, which could undergo an intermolecular cyclization resulting in a dihydropyrazinone. As the NRPS asaC lacks a condensation domain, it is improbable that it is responsible for condensation of Leu and Ile. One possibility is that asaC acts on a previously condensed dipeptide and functions as a Leu-Ile reductase to yield deoxyaspergillic acid. After asaC forms deoxyaspergillic acid, the cytochrome P450 asaD oxidizes the pyrazinone to the hydroxamic acid-containing bioactive metabolite aspergillic acid. The hydroxylase/desaturase asaB can then convert aspergillic acid to hydroxyaspergillic acid. Both aspergillic acid and hydroxyaspergillic acid can form complexes with iron producing ferriaspergillin analogs. The protein is Hydroxylase/desaturase asaB of Aspergillus flavus (strain ATCC 200026 / FGSC A1120 / IAM 13836 / NRRL 3357 / JCM 12722 / SRRC 167).